The primary structure comprises 72 residues: Translation initiation factor IF-1 (72 aa).

The 72-residue stretch at 1–72 folds into the S1-like domain; the sequence is MTKEDCIEMQ…SKGRIIFRSR (72 aa).

Belongs to the IF-1 family. In terms of assembly, component of the 30S ribosomal translation pre-initiation complex which assembles on the 30S ribosome in the order IF-2 and IF-3, IF-1 and N-formylmethionyl-tRNA(fMet); mRNA recruitment can occur at any time during PIC assembly.

Its subcellular location is the cytoplasm. In terms of biological role, one of the essential components for the initiation of protein synthesis. Stabilizes the binding of IF-2 and IF-3 on the 30S subunit to which N-formylmethionyl-tRNA(fMet) subsequently binds. Helps modulate mRNA selection, yielding the 30S pre-initiation complex (PIC). Upon addition of the 50S ribosomal subunit IF-1, IF-2 and IF-3 are released leaving the mature 70S translation initiation complex. This Buchnera aphidicola subsp. Baizongia pistaciae (strain Bp) protein is Translation initiation factor IF-1.